A 320-amino-acid polypeptide reads, in one-letter code: Cytochrome f (320 aa).

The first 35 residues, 1–35 (MQTRKTLSWIKEEITRSISVSLMIYIITGAYISNA), serve as a signal peptide directing secretion. The heme site is built by Tyr36, Cys56, Cys59, and His60. Residues 286 to 306 (VQGLLFFLASVILAQIFLVLK) traverse the membrane as a helical segment.

Belongs to the cytochrome f family. The 4 large subunits of the cytochrome b6-f complex are cytochrome b6, subunit IV (17 kDa polypeptide, petD), cytochrome f and the Rieske protein, while the 4 small subunits are PetG, PetL, PetM and PetN. The complex functions as a dimer. Heme serves as cofactor.

The protein localises to the plastid. It is found in the chloroplast thylakoid membrane. Its function is as follows. Component of the cytochrome b6-f complex, which mediates electron transfer between photosystem II (PSII) and photosystem I (PSI), cyclic electron flow around PSI, and state transitions. This chain is Cytochrome f, found in Populus trichocarpa (Western balsam poplar).